The chain runs to 124 residues: Small ribosomal subunit protein uS13 (124 aa).

Residues 95–124 (GLPVRGQRTKTNARTRKGPKRTIAGKKKAR) are disordered.

This sequence belongs to the universal ribosomal protein uS13 family. Part of the 30S ribosomal subunit. Forms a loose heterodimer with protein S19. Forms two bridges to the 50S subunit in the 70S ribosome.

Located at the top of the head of the 30S subunit, it contacts several helices of the 16S rRNA. In the 70S ribosome it contacts the 23S rRNA (bridge B1a) and protein L5 of the 50S subunit (bridge B1b), connecting the 2 subunits; these bridges are implicated in subunit movement. Contacts the tRNAs in the A and P-sites. In Mycobacterium sp. (strain JLS), this protein is Small ribosomal subunit protein uS13.